We begin with the raw amino-acid sequence, 411 residues long: MMP alpha-(1-&gt;4)-mannosyltransferase (411 aa).

This sequence belongs to the glycosyltransferase group 1 family. Glycosyltransferase 4 subfamily.

The enzyme catalyses [3-O-methyl-alpha-D-mannosyl-(1-&gt;4)](n)-3-O-methyl-D-mannose + GDP-alpha-D-mannose = alpha-D-mannosyl-(1-&gt;4)-[3-O-methyl-alpha-D-mannosyl-(1-&gt;4)](n)-3-O-methyl-D-mannose + GDP + H(+). The catalysed reaction is [3-O-methyl-alpha-D-mannosyl-(1-&gt;4)](n)-1-O,3-O-dimethyl-alpha-D-mannose + GDP-alpha-D-mannose = alpha-D-mannosyl-(1-&gt;4)-[3-O-methyl-alpha-D-mannosyl-(1-&gt;4)](n)-1-O,3-O-dimethyl-alpha-D-mannose + GDP + H(+). Its activity is regulated as follows. Activity is significantly enhanced in the presence of Mg(2+). Glycosyltransferase involved in the biosynthesis of 3-O-methylmannose polysaccharides (MMP), which are intracellular polymethylated polysaccharides implicated in the modulation of fatty acid metabolism in non-tuberculous mycobacteria. Highly specific alpha-(1-&gt;4)-mannosyltransferase that can transfer mannose units from GDP-mannose to a wide range of alpha-(1-&gt;4) oligomannosides longer than three mannoses, including all hydrolytic products of MmpH. Can use synthetic trimannosides and tetramannosides as substrates, but not mono- and disaccharides, and is significantly more active with the methylated substrates, preferring the tetramannosides over the trimannosides. The sequence is that of MMP alpha-(1-&gt;4)-mannosyltransferase from Mycolicibacterium hassiacum (strain DSM 44199 / CIP 105218 / JCM 12690 / 3849) (Mycobacterium hassiacum).